Reading from the N-terminus, the 427-residue chain is Interleukin-13 receptor subunit alpha-1 (427 aa).

An N-terminal signal peptide occupies residues 1–21; the sequence is MEWPARLCGLWALLLCAGGGG. The Extracellular portion of the chain corresponds to 22–343; sequence GGGGAAPTET…MSIGKKRNST (322 aa). Fibronectin type-III domains follow at residues 34-123, 128-226, and 227-339; these read PVTN…PPEG, AVTE…TSRV, and KPDP…IGKK. 2 N-linked (GlcNAc...) asparagine glycosylation sites follow: N37 and N61. Intrachain disulfides connect C62/C102, C95/C117, and C134/C144. N-linked (GlcNAc...) asparagine glycans are attached at residues N105, N138, and N157. C173 and C185 are disulfide-bonded. N-linked (GlcNAc...) asparagine glycosylation is found at N235, N265, N293, N329, and N341. 2 cysteine pairs are disulfide-bonded: C257-C320 and C282-C296. The WSXWS motif motif lies at 327-331; that stretch reads WSNWS. The helical transmembrane segment at 344 to 367 threads the bilayer; sequence LYITMLLIVPVIVAGAIIVLLLYL. Residues 368–427 lie on the Cytoplasmic side of the membrane; it reads KRLKIIIFPPIPDPGKIFKEMFGDQNDDTLHWKKYDIYEKQTKEETDSVVLIENLKKASQ. The Box 1 motif motif lies at 374 to 382; it reads IFPPIPDPG.

The protein belongs to the type I cytokine receptor family. Type 5 subfamily. In terms of assembly, interleukin-13 receptor is a complex of IL4R, IL13RA1, and possibly other components. Interacts with TRAF3IP1. Interacts with IL4. In terms of tissue distribution, ubiquitous. Highest levels in heart, liver, skeletal muscle and ovary; lowest levels in brain, lung and kidney. Also found in B-cells, T-cells and endothelial cells.

The protein resides in the membrane. In terms of biological role, binds with low affinity to interleukin-13 (IL13). Together with IL4RA can form a functional receptor for IL13. Also serves as an alternate accessory protein to the common cytokine receptor gamma chain for interleukin-4 (IL4) signaling, but cannot replace the function of IL2RG in allowing enhanced interleukin-2 (IL2) binding activity. The protein is Interleukin-13 receptor subunit alpha-1 (IL13RA1) of Homo sapiens (Human).